The chain runs to 444 residues: DNA repair protein RadA (444 aa).

Residues 8 to 25 (CSNCGNISPKWSGQCFDC) form a C4-type zinc finger. 89–96 (GDPGIGKS) provides a ligand contact to ATP. The short motif at 248 to 252 (KNRFG) is the RadA KNRFG motif element. A lon-protease-like region spans residues 347-444 (EVYLSIAGGL…HLKDLKEIIK (98 aa)).

The protein belongs to the RecA family. RadA subfamily.

Functionally, DNA-dependent ATPase involved in processing of recombination intermediates, plays a role in repairing DNA breaks. Stimulates the branch migration of RecA-mediated strand transfer reactions, allowing the 3' invading strand to extend heteroduplex DNA faster. Binds ssDNA in the presence of ADP but not other nucleotides, has ATPase activity that is stimulated by ssDNA and various branched DNA structures, but inhibited by SSB. Does not have RecA's homology-searching function. This Rickettsia conorii (strain ATCC VR-613 / Malish 7) protein is DNA repair protein RadA.